Reading from the N-terminus, the 562-residue chain is Glutamate--tRNA ligase (562 aa).

The short motif at 101–111 (PEPNGYPHIGH) is the 'HIGH' region element.

This sequence belongs to the class-I aminoacyl-tRNA synthetase family. Glutamate--tRNA ligase type 2 subfamily.

The protein resides in the cytoplasm. The enzyme catalyses tRNA(Glu) + L-glutamate + ATP = L-glutamyl-tRNA(Glu) + AMP + diphosphate. In terms of biological role, catalyzes the attachment of glutamate to tRNA(Glu) in a two-step reaction: glutamate is first activated by ATP to form Glu-AMP and then transferred to the acceptor end of tRNA(Glu). The chain is Glutamate--tRNA ligase from Cenarchaeum symbiosum (strain A).